A 155-amino-acid polypeptide reads, in one-letter code: Putative pre-16S rRNA nuclease (155 aa).

This sequence belongs to the YqgF nuclease family.

It is found in the cytoplasm. In terms of biological role, could be a nuclease involved in processing of the 5'-end of pre-16S rRNA. The sequence is that of Putative pre-16S rRNA nuclease from Wolbachia sp. subsp. Brugia malayi (strain TRS).